The sequence spans 230 residues: Voltage-gated hydrogen channel 1 (230 aa).

The Cytoplasmic segment spans residues 1 to 58 (MAGCLRHFTSVGDDTKKKAWKEEDVEVAHEEEPKNTPHPFIASYSFRGALKWLFSSHK). Residues 59–79 (FQIVIICLVILDALFVLVEVL) form a helical membrane-spanning segment. At 80–96 (LDLELLAEKVDHIIPEI) the chain is on the extracellular side. Residues 97–119 (FHYLSISVLSFFILEIAGKLYAF) traverse the membrane as a helical segment. The Cytoplasmic segment spans residues 120-127 (RLEFFHHK). The helical transmembrane segment at 128–148 (FEVFDAAIVVISFIIDIVYIS) threads the bilayer. Residues 149-155 (REDIFNA) lie on the Extracellular side of the membrane. A helical transmembrane segment spans residues 156–176 (VGLLILLRLWRVARIVNGIIV). Residues 177 to 226 (SVKTQAEDKIHRLKENQESLLEKVAHLEQQCAQQEQEIVRLQTLLQQHNV) are a coiled coil. Topologically, residues 177–230 (SVKTQAEDKIHRLKENQESLLEKVAHLEQQCAQQEQEIVRLQTLLQQHNVFPAS) are cytoplasmic.

This sequence belongs to the hydrogen channel family. In terms of assembly, homodimer.

Its subcellular location is the membrane. The protein resides in the cell membrane. Functionally, mediates the voltage-dependent proton permeability of excitable membranes. Forms a proton-selective channel through which protons may pass in accordance with their electrochemical gradient. The polypeptide is Voltage-gated hydrogen channel 1 (hvcn1) (Xenopus tropicalis (Western clawed frog)).